The chain runs to 133 residues: Holo-[acyl-carrier-protein] synthase (133 aa).

Mg(2+)-binding residues include Asp-8 and Glu-57.

It belongs to the P-Pant transferase superfamily. AcpS family. The cofactor is Mg(2+).

It localises to the cytoplasm. It catalyses the reaction apo-[ACP] + CoA = holo-[ACP] + adenosine 3',5'-bisphosphate + H(+). Transfers the 4'-phosphopantetheine moiety from coenzyme A to a Ser of acyl-carrier-protein. This chain is Holo-[acyl-carrier-protein] synthase, found in Bartonella quintana (strain Toulouse) (Rochalimaea quintana).